A 299-amino-acid chain; its full sequence is Oxygen-dependent coproporphyrinogen-III oxidase (299 aa).

S92 provides a ligand contact to substrate. Mn(2+) is bound by residues H96 and H106. Catalysis depends on H106, which acts as the Proton donor. Residue 108–110 participates in substrate binding; sequence NVR. 2 residues coordinate Mn(2+): H145 and H175. An important for dimerization region spans residues 240-275; it reads YVEFNLVWDRGTLFGLQTGGRTESILMSMPPLVRWE. Residue 258–260 participates in substrate binding; the sequence is GGR.

It belongs to the aerobic coproporphyrinogen-III oxidase family. As to quaternary structure, homodimer. The cofactor is Mn(2+).

It localises to the cytoplasm. It catalyses the reaction coproporphyrinogen III + O2 + 2 H(+) = protoporphyrinogen IX + 2 CO2 + 2 H2O. It functions in the pathway porphyrin-containing compound metabolism; protoporphyrin-IX biosynthesis; protoporphyrinogen-IX from coproporphyrinogen-III (O2 route): step 1/1. Functionally, involved in the heme biosynthesis. Catalyzes the aerobic oxidative decarboxylation of propionate groups of rings A and B of coproporphyrinogen-III to yield the vinyl groups in protoporphyrinogen-IX. This is Oxygen-dependent coproporphyrinogen-III oxidase from Escherichia coli (strain K12 / MC4100 / BW2952).